Consider the following 320-residue polypeptide: Nod factor export ATP-binding protein I (320 aa).

An ABC transporter domain is found at 15–245; it reads VSATGVWKKR…LGALKILEID (231 aa). Residue 47 to 54 coordinates ATP; it reads GTNGAGKS.

The protein belongs to the ABC transporter superfamily. Lipooligosaccharide exporter (TC 3.A.1.102) family. As to quaternary structure, the complex is composed of two ATP-binding proteins (NodI) and two transmembrane proteins (NodJ).

Its subcellular location is the cell inner membrane. Part of the ABC transporter complex NodIJ involved in the export of the nodulation factors (Nod factors), the bacterial signal molecules that induce symbiosis and subsequent nodulation induction. Nod factors are LCO (lipo-chitin oligosaccharide), a modified beta-1,4-linked N-acetylglucosamine oligosaccharide. This subunit is responsible for energy coupling to the transport system. The polypeptide is Nod factor export ATP-binding protein I (Azorhizobium caulinodans (strain ATCC 43989 / DSM 5975 / JCM 20966 / LMG 6465 / NBRC 14845 / NCIMB 13405 / ORS 571)).